The following is a 204-amino-acid chain: Somatotropin (204 aa).

Positions 1–17 (MDRAVLLLSVLSLGVSS) are cleaved as a signal peptide. At Q18 the chain carries Pyrrolidone carboxylic acid. H35 contributes to the Zn(2+) binding site. C69 and C177 form a disulfide bridge. E186 contacts Zn(2+). C194 and C202 are oxidised to a cystine.

The protein belongs to the somatotropin/prolactin family.

The protein resides in the secreted. Its function is as follows. Growth hormone plays an important role in growth control and is involved in the regulation of several anabolic processes. Implicated as an osmoregulatory substance important for seawater adaptation. The polypeptide is Somatotropin (gh) (Morone saxatilis (Striped bass)).